The sequence spans 328 residues: Ferredoxin--NADP reductase (328 aa).

Residues glutamate 34, glutamine 42, tyrosine 47, valine 87, phenylalanine 120, aspartate 283, and threonine 323 each contribute to the FAD site.

The protein belongs to the ferredoxin--NADP reductase type 2 family. As to quaternary structure, homodimer. Requires FAD as cofactor.

It catalyses the reaction 2 reduced [2Fe-2S]-[ferredoxin] + NADP(+) + H(+) = 2 oxidized [2Fe-2S]-[ferredoxin] + NADPH. In Pediococcus pentosaceus (strain ATCC 25745 / CCUG 21536 / LMG 10740 / 183-1w), this protein is Ferredoxin--NADP reductase.